A 339-amino-acid chain; its full sequence is Glyceraldehyde-3-phosphate dehydrogenase (339 aa).

Residues 12–13 (RI), Asp-39, Arg-84, and Ser-127 contribute to the NAD(+) site. D-glyceraldehyde 3-phosphate is bound by residues 157–159 (SCT), Thr-188, Arg-203, 216–217 (TG), and Arg-239. Catalysis depends on Cys-158, which acts as the Nucleophile. Residue Asn-320 participates in NAD(+) binding.

This sequence belongs to the glyceraldehyde-3-phosphate dehydrogenase family. In terms of assembly, homotetramer.

The protein localises to the cytoplasm. The enzyme catalyses D-glyceraldehyde 3-phosphate + phosphate + NAD(+) = (2R)-3-phospho-glyceroyl phosphate + NADH + H(+). The protein operates within carbohydrate degradation; glycolysis; pyruvate from D-glyceraldehyde 3-phosphate: step 1/5. Functionally, catalyzes the oxidative phosphorylation of glyceraldehyde 3-phosphate (G3P) to 1,3-bisphosphoglycerate (BPG) using the cofactor NAD. The first reaction step involves the formation of a hemiacetal intermediate between G3P and a cysteine residue, and this hemiacetal intermediate is then oxidized to a thioester, with concomitant reduction of NAD to NADH. The reduced NADH is then exchanged with the second NAD, and the thioester is attacked by a nucleophilic inorganic phosphate to produce BPG. This Mycobacterium avium protein is Glyceraldehyde-3-phosphate dehydrogenase (gapA).